The primary structure comprises 97 residues: UPF0250 protein RSc0326 (97 aa).

The protein belongs to the UPF0250 family.

This is UPF0250 protein RSc0326 from Ralstonia nicotianae (strain ATCC BAA-1114 / GMI1000) (Ralstonia solanacearum).